The primary structure comprises 784 residues: E3 UFM1-protein ligase 1 homolog (784 aa).

Residues 401-481 (QKGNSSAQDL…GGGGGGNKKT (81 aa)) form a disordered region.

It belongs to the UFL1 family.

In terms of biological role, E3 UFM1-protein ligase that mediates ufmylation of target proteins. This chain is E3 UFM1-protein ligase 1 homolog, found in Drosophila ananassae (Fruit fly).